The sequence spans 122 residues: Small ribosomal subunit protein uS12c (122 aa).

It belongs to the universal ribosomal protein uS12 family. In terms of assembly, part of the 30S ribosomal subunit.

Its subcellular location is the plastid. The protein resides in the chloroplast. Functionally, with S4 and S5 plays an important role in translational accuracy. Located at the interface of the 30S and 50S subunits. This Chloranthus spicatus (Chulantree) protein is Small ribosomal subunit protein uS12c (rps12).